The sequence spans 73 residues: UPF0235 protein PCC7424_0673 (73 aa).

The protein belongs to the UPF0235 family.

This Gloeothece citriformis (strain PCC 7424) (Cyanothece sp. (strain PCC 7424)) protein is UPF0235 protein PCC7424_0673.